We begin with the raw amino-acid sequence, 127 residues long: Large ribosomal subunit protein bL12 (127 aa).

It belongs to the bacterial ribosomal protein bL12 family. As to quaternary structure, homodimer. Part of the ribosomal stalk of the 50S ribosomal subunit. Forms a multimeric L10(L12)X complex, where L10 forms an elongated spine to which 2 to 4 L12 dimers bind in a sequential fashion. Binds GTP-bound translation factors.

Forms part of the ribosomal stalk which helps the ribosome interact with GTP-bound translation factors. Is thus essential for accurate translation. The polypeptide is Large ribosomal subunit protein bL12 (Syntrophobacter fumaroxidans (strain DSM 10017 / MPOB)).